We begin with the raw amino-acid sequence, 759 residues long: ARF GTPase-activating protein GIT2 (759 aa).

Positions 1–124 (MSKRLRSNDV…AFVHRLPCRD (124 aa)) constitute an Arf-GAP domain. The segment at 11-34 (CADCSGPDPSWASVNRGTLICDEC) adopts a C4-type zinc-finger fold. 3 ANK repeats span residues 132–161 (DLSK…QANF), 166–198 (KGST…THDS), and 199–228 (SGKT…ELTD). Disordered stretches follow at residues 376 to 422 (VSNQ…DLSD) and 469 to 641 (QSEN…PSTE). The segment covering 385–402 (QDNDQPDYDSVASDEDTD) has biased composition (acidic residues). Positions 451-478 (NNNLSGELRIMQKKLQTLQSENSSLRRQ) form a coiled coil. Residues 469–489 (QSENSSLRRQATASACQVQTA) show a composition bias toward polar residues. Over residues 555–569 (TSSSSLPSFPSTLSW) the composition is skewed to low complexity. Residues 570–583 (SRDESTRRASRLEK) are compositionally biased toward basic and acidic residues.

As to quaternary structure, may form heterooligomers with GIT1. Directly interacts with protein Piccolo/PCLO. Interacts with PPFIA1 and PPFIA2. Interacts with ARHGEF7. Identified in a complex with ARHGEF6 and BIN2. Interacts with PAK3. Interacts with PXN/paxillin. Interacts with TGFB1I1. Forms a complex with EFNB1 and GRB4/NCK2.

Its function is as follows. GTPase-activating protein for ADP ribosylation factor family members, including ARF1. This is ARF GTPase-activating protein GIT2 (Git2) from Rattus norvegicus (Rat).